The primary structure comprises 930 residues: MDFTQLDDFAFAYYGLPDQSSLVSLVDQTHTFQSPTAFPQHQAMSGLAHSGLPFGTLPTGNRSQSMEGSKAPPDRTSPASNALEDSTTDEFGLASRNRADGTDLGVKPKEDKADATAAWSGLRTKAGKERRRLPLACIACRRKKIRCSGEKPACEHCLCSYIPCVYKVTTRKAGPRTDYMAMLDKRPKRMEERVIKAISKLDEEVASSVTCPVVKSAIPGTVPSSKPTKKRSAEEAFGPDLETWAKVPSEPKIEGDDGSSSLQVQGKEGNKLQQEGTEALPSQEIQEHLAELFFDNICGQSYHLLHKPSYMRKLKNGTLPPVLVLTVCAVAARFTSSPLVNSSRPEFLRGEEWASHARDICTRRYECPNLTILTCLLILGLHEFGTCQGGRSWALSGQAIRMAFALQLHKDLEYDPSGRNGTKTQLSFIDREIRRRIMWACFLMDRFNSFETDRPMFIREDTIELPLPVKEKYFQFDMPAPTEMLDGRVPHPPSPKDGQIADTRENMGVAAFLIRAIALWGRIITYLSQGCKDLDPNPLWEDKSHYMKHLNDIVNLEASLPLSLKYSAENLEVHKTEKTPSQFLLMHLCLQHNILFVSRAAMSARKQHGVHVDFFSEASKRTFNAANRISELLREAEQSGCFVSAPFAGYCAFSSTTVHILGIMSRNPSMKLTAQANLTTNVKYLHKMKKYWGMFHWMVENVRTQYRNVLDAMRAGANVEERATQPSFLQYGDWFNRYPRGLFDAEFMDPATHKRKDSGADGVLEAKPELRSVEEYFTLPTPRRVENKDTIRAAAPKRKQSAKKQTGMPAQPGQHLDSLQIIEPDAVSQEHKFSGGLGLQITGVAGFNPLAASKTQIPDFSTTMSPMSPANMTPFAQHAHTHTFFPPELLAMNFGQGSNGNTDPLDRQLIYGGYLMDASTGLGDGYTWAL.

The zn(2)-C6 fungal-type DNA-binding region spans 137 to 164 (CIACRRKKIRCSGEKPACEHCLCSYIPC).

Its subcellular location is the nucleus. In terms of biological role, zn(2)-C6 fungal-type transcription factor that has a role in the establishment of the fungus within the plant and/or the progress of the disease. Regulates the expression of virulence factors such as SIX1 and SIX6. In Fusarium oxysporum f. sp. lycopersici (strain 4287 / CBS 123668 / FGSC 9935 / NRRL 34936) (Fusarium vascular wilt of tomato), this protein is Zn(2)-C6 fungal-type transcription factor FTF1c.